The sequence spans 98 residues: Aspartyl/glutamyl-tRNA(Asn/Gln) amidotransferase subunit C (98 aa).

Belongs to the GatC family. Heterotrimer of A, B and C subunits.

It catalyses the reaction L-glutamyl-tRNA(Gln) + L-glutamine + ATP + H2O = L-glutaminyl-tRNA(Gln) + L-glutamate + ADP + phosphate + H(+). It carries out the reaction L-aspartyl-tRNA(Asn) + L-glutamine + ATP + H2O = L-asparaginyl-tRNA(Asn) + L-glutamate + ADP + phosphate + 2 H(+). Its function is as follows. Allows the formation of correctly charged Asn-tRNA(Asn) or Gln-tRNA(Gln) through the transamidation of misacylated Asp-tRNA(Asn) or Glu-tRNA(Gln) in organisms which lack either or both of asparaginyl-tRNA or glutaminyl-tRNA synthetases. The reaction takes place in the presence of glutamine and ATP through an activated phospho-Asp-tRNA(Asn) or phospho-Glu-tRNA(Gln). The protein is Aspartyl/glutamyl-tRNA(Asn/Gln) amidotransferase subunit C of Paenarthrobacter aurescens (strain TC1).